A 643-amino-acid chain; its full sequence is Phosphomethylpyrimidine synthase (643 aa).

Residues Asn-248, Met-277, Tyr-306, His-342, 362–364 (SRG), 403–406 (DGLR), and Glu-442 contribute to the substrate site. Zn(2+) is bound at residue His-446. Tyr-469 serves as a coordination point for substrate. His-510 contributes to the Zn(2+) binding site. [4Fe-4S] cluster is bound by residues Cys-590, Cys-593, and Cys-598.

The protein belongs to the ThiC family. As to quaternary structure, homodimer. It depends on [4Fe-4S] cluster as a cofactor.

The catalysed reaction is 5-amino-1-(5-phospho-beta-D-ribosyl)imidazole + S-adenosyl-L-methionine = 4-amino-2-methyl-5-(phosphooxymethyl)pyrimidine + CO + 5'-deoxyadenosine + formate + L-methionine + 3 H(+). It functions in the pathway cofactor biosynthesis; thiamine diphosphate biosynthesis. Functionally, catalyzes the synthesis of the hydroxymethylpyrimidine phosphate (HMP-P) moiety of thiamine from aminoimidazole ribotide (AIR) in a radical S-adenosyl-L-methionine (SAM)-dependent reaction. The polypeptide is Phosphomethylpyrimidine synthase (Paraburkholderia phymatum (strain DSM 17167 / CIP 108236 / LMG 21445 / STM815) (Burkholderia phymatum)).